Consider the following 126-residue polypeptide: Protein ApaG (126 aa).

One can recognise an ApaG domain in the interval 2–126 (NQLAASVSVD…FRLSIPGLLH (125 aa)).

The protein is Protein ApaG of Shewanella pealeana (strain ATCC 700345 / ANG-SQ1).